We begin with the raw amino-acid sequence, 325 residues long: Adenine deaminase (325 aa).

Positions 8, 10, and 186 each coordinate Zn(2+). Residue Glu189 is the Proton donor of the active site. Asp267 provides a ligand contact to Zn(2+). A substrate-binding site is contributed by Asp268.

The protein belongs to the metallo-dependent hydrolases superfamily. Adenosine and AMP deaminases family. Adenine deaminase type 2 subfamily. Requires Zn(2+) as cofactor.

It catalyses the reaction adenine + H2O + H(+) = hypoxanthine + NH4(+). Its function is as follows. Catalyzes the hydrolytic deamination of adenine to hypoxanthine. Plays an important role in the purine salvage pathway and in nitrogen catabolism. The polypeptide is Adenine deaminase (Chelativorans sp. (strain BNC1)).